The primary structure comprises 137 residues: Protein cornichon homolog 4 (137 aa).

The next 3 membrane-spanning stretches (helical) occupy residues 8–28, 53–73, and 113–133; these read LISFFFLIALVGIIVYQLVCL, FIVQGVLCVFYLLTGHWFMTL, and LAYIVLNLFLTIFWMIYSALD.

The protein belongs to the cornichon family.

It localises to the membrane. In Arabidopsis thaliana (Mouse-ear cress), this protein is Protein cornichon homolog 4.